The sequence spans 460 residues: Light-independent protochlorophyllide reductase subunit N (460 aa).

Residues Cys-22, Cys-47, and Cys-107 each contribute to the [4Fe-4S] cluster site.

This sequence belongs to the BchN/ChlN family. In terms of assembly, protochlorophyllide reductase is composed of three subunits; ChlL, ChlN and ChlB. Forms a heterotetramer of two ChlB and two ChlN subunits. It depends on [4Fe-4S] cluster as a cofactor.

It catalyses the reaction chlorophyllide a + oxidized 2[4Fe-4S]-[ferredoxin] + 2 ADP + 2 phosphate = protochlorophyllide a + reduced 2[4Fe-4S]-[ferredoxin] + 2 ATP + 2 H2O. The protein operates within porphyrin-containing compound metabolism; chlorophyll biosynthesis (light-independent). Its function is as follows. Component of the dark-operative protochlorophyllide reductase (DPOR) that uses Mg-ATP and reduced ferredoxin to reduce ring D of protochlorophyllide (Pchlide) to form chlorophyllide a (Chlide). This reaction is light-independent. The NB-protein (ChlN-ChlB) is the catalytic component of the complex. In Thermosynechococcus vestitus (strain NIES-2133 / IAM M-273 / BP-1), this protein is Light-independent protochlorophyllide reductase subunit N.